The primary structure comprises 463 residues: Probable mannan endo-1,4-beta-mannosidase F (463 aa).

An N-terminal signal peptide occupies residues 1 to 18 (MRSLSSIALLSVVGAASA). The 36-residue stretch at 19–54 (QAGPWAQCGGKSFSGSSECASGWKCQELNEWFSQCV) folds into the CBM1 domain. The tract at residues 57 to 78 (AESTTPTVSSTPTPTDAPSVSI) is disordered. A compositionally biased stretch (low complexity) spans 59–77 (STTPTVSSTPTPTDAPSVS). The segment at 75-118 (SVSITASATTGINKSISVSSASKSTPLPSSSSASPSPRPTGSGS) is ser-rich linker. Residue Asn-87 is glycosylated (N-linked (GlcNAc...) asparagine). Low complexity predominate over residues 93–118 (SSASKSTPLPSSSSASPSPRPTGSGS). Residues 93-121 (SSASKSTPLPSSSSASPSPRPTGSGSFAK) form a disordered region. A catalytic region spans residues 119-463 (FAKADGLQFS…MDHMENVNKN (345 aa)). Substrate contacts are provided by Trp-171 and Asn-285. The Proton donor role is filled by Glu-286. Residue Tyr-361 coordinates substrate. The Nucleophile role is filled by Glu-395. A substrate-binding site is contributed by Trp-424.

This sequence belongs to the glycosyl hydrolase 5 (cellulase A) family.

Its subcellular location is the secreted. The catalysed reaction is Random hydrolysis of (1-&gt;4)-beta-D-mannosidic linkages in mannans, galactomannans and glucomannans.. Endo-1,4-mannanase, a crucial enzyme for depolymerization of seed galactomannans and wood galactoglucomannans. The protein is Probable mannan endo-1,4-beta-mannosidase F (manF) of Aspergillus flavus (strain ATCC 200026 / FGSC A1120 / IAM 13836 / NRRL 3357 / JCM 12722 / SRRC 167).